The following is a 342-amino-acid chain: tRNA N6-adenosine threonylcarbamoyltransferase (342 aa).

Fe cation-binding residues include His-111 and His-115. Residues Leu-134–Gly-138, Asp-167, Gly-180, and Asn-275 contribute to the substrate site. Asp-303 lines the Fe cation pocket.

The protein belongs to the KAE1 / TsaD family. The cofactor is Fe(2+).

It is found in the cytoplasm. The enzyme catalyses L-threonylcarbamoyladenylate + adenosine(37) in tRNA = N(6)-L-threonylcarbamoyladenosine(37) in tRNA + AMP + H(+). Required for the formation of a threonylcarbamoyl group on adenosine at position 37 (t(6)A37) in tRNAs that read codons beginning with adenine. Is involved in the transfer of the threonylcarbamoyl moiety of threonylcarbamoyl-AMP (TC-AMP) to the N6 group of A37, together with TsaE and TsaB. TsaD likely plays a direct catalytic role in this reaction. The sequence is that of tRNA N6-adenosine threonylcarbamoyltransferase from Paraburkholderia xenovorans (strain LB400).